The sequence spans 402 residues: MKREYDVLVVGGGPGGAFAAKTFAEKGYSVLLTEKRPAIGAPVRCAEGVGKALMHEFFKPEDRWVAAEIEKANIIAPDGFKMELEPEKAGAEVGYVLHRKVFDRDLVWMAAGAGADIQVKTRAVTPIMEDGAVKGAILNQGGIAQEVRAGLTIAADGVESKFARWCGVDTTVPLREMETCAQYLMTGIDIDAHATEFYVGNNIAPGGYVWIFPKGDKTANVGIGVGGDRCKPGNRPIDYLNRFVARNFPNGKTIELIAGGVSICQPLPCTVANNLMIVGDAARVSDPLTGGGIYAALYTGKLAGDVGSKAIEKGDTSTQALMPYDETWRASYLGKALERNYQIKEVFVKLNDDDLNAIVHSVSKMNLSDFNTLNLIKNIIAANPKLAIKLGKAGLKSLLDSF.

Positions 15, 34, 45, 46, 48, 99, 123, 280, 292, and 293 each coordinate FAD.

This sequence belongs to the geranylgeranyl reductase family. DGGGPL reductase subfamily. FAD serves as cofactor.

It catalyses the reaction a 2,3-bis-O-phytanyl-sn-glycerol 1-phospholipid + 8 oxidized 2[4Fe-4S]-[ferredoxin] = a 2,3-bis-O-(geranylgeranyl)-sn-glycerol 1-phospholipid + 8 reduced 2[4Fe-4S]-[ferredoxin] + 16 H(+). It carries out the reaction 2,3-bis-O-(phytanyl)-sn-glycerol 1-phosphate + 8 oxidized 2[4Fe-4S]-[ferredoxin] = 2,3-bis-O-(geranylgeranyl)-sn-glycerol 1-phosphate + 8 reduced 2[4Fe-4S]-[ferredoxin] + 16 H(+). The catalysed reaction is a 2,3-bis-O-phytanyl-sn-glycerol 1-phospholipid + 8 A = a 2,3-bis-O-(geranylgeranyl)-sn-glycerol 1-phospholipid + 8 AH2. The enzyme catalyses CDP-2,3-bis-O-(geranylgeranyl)-sn-glycerol + 8 AH2 = CDP-2,3-bis-O-(phytanyl)-sn-glycerol + 8 A. It catalyses the reaction archaetidylserine + 8 AH2 = 2,3-bis-O-phytanyl-sn-glycero-3-phospho-L-serine + 8 A. It participates in membrane lipid metabolism; glycerophospholipid metabolism. Functionally, is involved in the reduction of 2,3-digeranylgeranylglycerophospholipids (unsaturated archaeols) into 2,3-diphytanylglycerophospholipids (saturated archaeols) in the biosynthesis of archaeal membrane lipids. Catalyzes the formation of archaetidic acid (2,3-di-O-phytanyl-sn-glyceryl phosphate) from 2,3-di-O-geranylgeranylglyceryl phosphate (DGGGP) via the hydrogenation of each double bond of the isoprenoid chains. Is also probably able to reduce double bonds of geranyl groups in CDP-2,3-bis-O-(geranylgeranyl)-sn-glycerol and archaetidylserine, thus acting at various stages in the biosynthesis of archaeal membrane lipids. The chain is Digeranylgeranylglycerophospholipid reductase from Methanospirillum hungatei JF-1 (strain ATCC 27890 / DSM 864 / NBRC 100397 / JF-1).